The following is a 378-amino-acid chain: Putative zinc finger protein C09F5.3 (378 aa).

Residues 1–14 (MRKTEKMKRPHNSS) show a composition bias toward basic residues. 2 disordered regions span residues 1 to 36 (MRKTEKMKRPHNSSHVKQEERADDSHSNSPASSKSI) and 61 to 80 (TLSEHVPEKKPSISTSNSAP). Basic and acidic residues-rich tracts occupy residues 16-26 (VKQEERADDSH) and 62-71 (LSEHVPEKKP). The C2H2-type 1 zinc finger occupies 42-65 (LKCELCSTVCSSISQLQSHTLSEH). A C2H2-type 2; degenerate zinc finger spans residues 85–107 (VACQQCEDTFEDFAQFAIHMKSH). The segment at 204 to 226 (YGCALCATSYPSQLHLITHVQMS) adopts a C2H2-type 3; degenerate zinc-finger fold. Positions 231–250 (TFYPPSLPIPTPPSPKSTPK) are disordered. Over residues 235–246 (PSLPIPTPPSPK) the composition is skewed to pro residues. 4 C2H2-type zinc fingers span residues 254–277 (LQCSVCDESVLGEDGLDEHRLRKH), 284–306 (DKCADCQEPLLNETSFVEHCLRH), 312–334 (HHCPVCRQSLRSDSQIHAHCAYH), and 355–377 (FVCPICGEKLDDGFALIEHTKIH).

It localises to the nucleus. The protein is Putative zinc finger protein C09F5.3 of Caenorhabditis elegans.